We begin with the raw amino-acid sequence, 416 residues long: Antigen EG13 (416 aa).

The F-BAR domain occupies 1–247; the sequence is MIQERADIEK…TVAKVDADAD (247 aa). The tract at residues 297 to 327 is disordered; it reads LKTFTSPDRGGPIPGTTDSGSNISTSPVHTT. Over residues 312-327 the composition is skewed to polar residues; the sequence is TTDSGSNISTSPVHTT. An SH3 domain is found at 361 to 416; sequence RPGVPIRALYDYVGVEADELSFNSGDLFEKLEDEDEQGWCKGRKDGRVGLYPRQLR.

The sequence is that of Antigen EG13 (EG13) from Echinococcus granulosus (Hydatid tapeworm).